Consider the following 208-residue polypeptide: Small ribosomal subunit protein uS4A (208 aa).

The S4 RNA-binding domain occupies 98–164 (TRLDNVVYTL…AKIQSAIQAV (67 aa)).

This sequence belongs to the universal ribosomal protein uS4 family. In terms of assembly, part of the 30S ribosomal subunit. Contacts protein S5. The interaction surface between S4 and S5 is involved in control of translational fidelity.

One of the primary rRNA binding proteins, it binds directly to 16S rRNA where it nucleates assembly of the body of the 30S subunit. In terms of biological role, with S5 and S12 plays an important role in translational accuracy. The polypeptide is Small ribosomal subunit protein uS4A (Bdellovibrio bacteriovorus (strain ATCC 15356 / DSM 50701 / NCIMB 9529 / HD100)).